Here is a 473-residue protein sequence, read N- to C-terminus: Glutamate--tRNA ligase (473 aa).

The 'HIGH' region signature appears at 11–21; the sequence is PSPTGFLHIGG. Residues 240 to 244 carry the 'KMSKS' region motif; that stretch reads KLSKR. Position 243 (Lys-243) interacts with ATP.

The protein belongs to the class-I aminoacyl-tRNA synthetase family. Glutamate--tRNA ligase type 1 subfamily. As to quaternary structure, monomer.

It localises to the cytoplasm. It carries out the reaction tRNA(Glu) + L-glutamate + ATP = L-glutamyl-tRNA(Glu) + AMP + diphosphate. Catalyzes the attachment of glutamate to tRNA(Glu) in a two-step reaction: glutamate is first activated by ATP to form Glu-AMP and then transferred to the acceptor end of tRNA(Glu). The polypeptide is Glutamate--tRNA ligase (Rhodopseudomonas palustris (strain BisB5)).